Reading from the N-terminus, the 556-residue chain is Formate--tetrahydrofolate ligase (556 aa).

Residue 65 to 72 participates in ATP binding; sequence TPAGEGKT.

It belongs to the formate--tetrahydrofolate ligase family.

The enzyme catalyses (6S)-5,6,7,8-tetrahydrofolate + formate + ATP = (6R)-10-formyltetrahydrofolate + ADP + phosphate. Its pathway is one-carbon metabolism; tetrahydrofolate interconversion. The polypeptide is Formate--tetrahydrofolate ligase (Lachnoclostridium phytofermentans (strain ATCC 700394 / DSM 18823 / ISDg) (Clostridium phytofermentans)).